The chain runs to 274 residues: GATA transcription factor 1 (274 aa).

Disordered regions lie at residues 1 to 39 (MEMESFMDDLLNFSVPEEEEDDDEHTQPPRNITRRKTGL) and 102 to 132 (SPVSVLETSSHSSTTTTSNSSGGSNGSTAVA). The short motif at 152–159 (KARSKRRR) is the Nuclear localization signal element. Residues 190–244 (LIMGRKCQHCGAEKTPQWRAGPAGPKTLCNACGVRYKSGRLVPEYRPANSPTFTA) form a GATA-type zinc finger.

The protein belongs to the type IV zinc-finger family. Class A subfamily. As to expression, mostly expressed in roots. Also expressed in stems, flowers and leaves.

The protein localises to the nucleus. Functionally, transcriptional activator that specifically binds 5'-GATA-3' or 5'-GAT-3' motifs within gene promoters. May be involved in the regulation of some light-responsive genes. This chain is GATA transcription factor 1 (GATA1), found in Arabidopsis thaliana (Mouse-ear cress).